Here is a 297-residue protein sequence, read N- to C-terminus: Nucleotide-binding protein Bxeno_A0336 (297 aa).

8–15 (GISGSGKS) is an ATP binding site. 57–60 (DARS) serves as a coordination point for GTP.

This sequence belongs to the RapZ-like family.

Functionally, displays ATPase and GTPase activities. The polypeptide is Nucleotide-binding protein Bxeno_A0336 (Paraburkholderia xenovorans (strain LB400)).